The chain runs to 265 residues: MDKSKNLFDLLQDDEEVEKKPTTKSTQAAAAPVAAKKPVAPKTENKVENRSPKLGGQSKPKRVNNGEQQVATSEERQNTKRDSKSYPKHQPRTDATGNIRNRQFDRKSGTGRPHNENKKGGAGQGNWGKEGSVDAETNVATVTPTEGEKESTEPVVAAPVEDKTLTLGEYLKQQGSVTLEAPKLRVAGEGETKNAQWDEFEPIQREVVKQRDTKSVKEEKKTKKNVIQVELKSAPSTQRPKGNTKKVVKGVDVTDVNIFPSLSKA.

The segment at 1–160 (MDKSKNLFDL…STEPVVAAPV (160 aa)) is disordered. Positions 28–42 (AAAAPVAAKKPVAPK) are enriched in low complexity. Basic and acidic residues-rich tracts occupy residues 73–85 (SEER…DSKS) and 102–119 (RQFD…ENKK).

It belongs to the SERBP1-HABP4 family.

Functionally, ribosome-binding protein that acts as a regulator of mRNA translation by promoting ribosome inactivation. This is an uncharacterized protein from Dictyostelium discoideum (Social amoeba).